Reading from the N-terminus, the 763-residue chain is Phosphoglycerol transferase I (763 aa).

Transmembrane regions (helical) follow at residues Leu-4 to Trp-19, Trp-26 to Ser-48, Tyr-76 to Leu-98, and Pro-105 to Ala-127.

It belongs to the OpgB family.

The protein localises to the cell inner membrane. The catalysed reaction is a phosphatidylglycerol + a membrane-derived-oligosaccharide D-glucose = a 1,2-diacyl-sn-glycerol + a membrane-derived-oligosaccharide 6-(glycerophospho)-D-glucose.. It participates in glycan metabolism; osmoregulated periplasmic glucan (OPG) biosynthesis. Transfers a phosphoglycerol residue from phosphatidylglycerol to the membrane-bound nascent glucan backbones. This Escherichia coli O157:H7 protein is Phosphoglycerol transferase I.